Consider the following 74-residue polypeptide: DNA-directed RNA polymerase subunit omega (74 aa).

It belongs to the RNA polymerase subunit omega family. The RNAP catalytic core consists of 2 alpha, 1 beta, 1 beta' and 1 omega subunit. When a sigma factor is associated with the core the holoenzyme is formed, which can initiate transcription.

The enzyme catalyses RNA(n) + a ribonucleoside 5'-triphosphate = RNA(n+1) + diphosphate. Promotes RNA polymerase assembly. Latches the N- and C-terminal regions of the beta' subunit thereby facilitating its interaction with the beta and alpha subunits. This Solidesulfovibrio magneticus (strain ATCC 700980 / DSM 13731 / RS-1) (Desulfovibrio magneticus) protein is DNA-directed RNA polymerase subunit omega.